The sequence spans 121 residues: MDKEKLIAPNQMGYLILKDDGNLLDSGGDLKNDDRSANVIMGLLNLTDSIDEDFMPNSSCERITIDYDQHYYSICMSNRRIYVVKLSKTHTQNGATTSSSSSTSYNDAAEGNNISSSTVLA.

Residues 91 to 121 form a disordered region; that stretch reads TQNGATTSSSSSTSYNDAAEGNNISSSTVLA. The segment covering 112–121 has biased composition (polar residues); the sequence is NNISSSTVLA.

Belongs to the LAMTOR4 family. Part of the Ragulator complex.

The protein resides in the lysosome. Regulator of the TOR pathway, a signaling cascade that promotes cell growth in response to growth factors, energy levels, and amino acids. As part of the Ragulator complex, may activate the TOR signaling cascade in response to amino acids. This Drosophila pseudoobscura pseudoobscura (Fruit fly) protein is Ragulator complex protein LAMTOR4 homolog.